Here is a 199-residue protein sequence, read N- to C-terminus: Inner membrane-spanning protein YciB (199 aa).

Transmembrane regions (helical) follow at residues 4 to 24, 36 to 56, 64 to 84, 90 to 110, 135 to 155, and 162 to 182; these read FIDF…PRIV, IFSA…TLFL, GQWI…TFQS, WKAP…HFIG, LAWV…AFTF, and FKVF…GVFL.

The protein belongs to the YciB family.

The protein localises to the cell inner membrane. Its function is as follows. Plays a role in cell envelope biogenesis, maintenance of cell envelope integrity and membrane homeostasis. The chain is Inner membrane-spanning protein YciB from Azotobacter vinelandii (strain DJ / ATCC BAA-1303).